A 635-amino-acid chain; its full sequence is Thrombopoietin receptor (635 aa).

The first 25 residues, 1–25, serve as a signal peptide directing secretion; the sequence is MPSWALFMVTSCLLLAPQNLAQVSS. Over 26 to 491 the chain is Extracellular; that stretch reads QDVSLLASDS…RVETATETAW (466 aa). Intrachain disulfides connect Cys-40–Cys-50 and Cys-77–Cys-93. N-linked (GlcNAc...) asparagine glycans are attached at residues Asn-117 and Asn-178. The Fibronectin type-III 1 domain occupies 172–281; sequence GPRDPKNSTG…WSLPVTVDLP (110 aa). 4 disulfides stabilise this stretch: Cys-193-Cys-323, Cys-194-Cys-241, Cys-291-Cys-301, and Cys-334-Cys-352. A disordered region spans residues 205–232; that stretch reads ALDQSPCAQPTMPWQDGPKQTSPSREAS. N-linked (GlcNAc...) asparagine glycosylation occurs at Asn-298. N-linked (GlcNAc...) asparagine glycosylation is present at Asn-358. Positions 392 to 486 constitute a Fibronectin type-III 2 domain; sequence PTPNLHWREI…WSDPTRVETA (95 aa). Positions 474-478 match the WSXWS motif motif; that stretch reads WSSWS. A helical membrane pass occupies residues 492–513; it reads ISLVTALHLVLGLSAVLGLLLL. Topologically, residues 514-635 are cytoplasmic; the sequence is RWQFPAHYRR…YLPLSYWQQP (122 aa). Positions 528 to 536 match the Box 1 motif motif; the sequence is LWPSLPDLH. Glycyl lysine isopeptide (Lys-Gly) (interchain with G-Cter in ubiquitin) cross-links involve residues Lys-553 and Lys-573. A phosphotyrosine mark is found at Tyr-591, Tyr-626, and Tyr-631.

This sequence belongs to the type I cytokine receptor family. Type 1 subfamily. In terms of assembly, homodimer. Interacts with ATXN2L. Interacts with JAK2 and TYK2; these interactions increase MPL localization to the cell membrane. Interacts with THPO. Interacts with SHIP/INPP5D. Interacts with BTK. Interacts with SYK; this interaction negatively regulates THPO-mediated ERK1/2 signaling. In terms of processing, phosphorylated at Tyr-591 in response to THPO stimulation. Post-translationally, ubiquitination at Lys-553 and Lys-573 targets MPL for degradation by both the lysosomal and proteasomal pathways. The E3 ubiquitin-protein ligase CBL significantly contributes to this ubiquitination. In terms of tissue distribution, expressed at a low level in a large number of cells of hematopoietic origin. Isoform 1 and isoform 2 are always found to be coexpressed.

The protein localises to the cell membrane. The protein resides in the golgi apparatus. Its subcellular location is the cell surface. Its function is as follows. Receptor for thrombopoietin that regulates hematopoietic stem cell renewal, megakaryocyte differentiation, and platelet formation. Upon activation by THPO, induces rapid tyrosine phosphorylation and activation of JAK2, providing docking sites for many signaling proteins such as STAT5, SHIP/INPP5D, GRB2, SOS1 and PI3K. In turn, These signaling cascades lead to the proliferation, survival, and differentiation of megakaryocytes, ultimately leading to increased platelet production. The polypeptide is Thrombopoietin receptor (MPL) (Homo sapiens (Human)).